The sequence spans 246 residues: Putative S-adenosyl-L-methionine-dependent methyltransferase Mflv_0168 (246 aa).

Residues aspartate 112 and 141–142 each bind S-adenosyl-L-methionine; that span reads DL.

This sequence belongs to the UPF0677 family.

Its function is as follows. Exhibits S-adenosyl-L-methionine-dependent methyltransferase activity. In Mycolicibacterium gilvum (strain PYR-GCK) (Mycobacterium gilvum (strain PYR-GCK)), this protein is Putative S-adenosyl-L-methionine-dependent methyltransferase Mflv_0168.